Consider the following 369-residue polypeptide: 5-amino-6-(D-ribitylamino)uracil--L-tyrosine 4-hydroxyphenyl transferase (369 aa).

Residues valine 56 to leucine 292 form the Radical SAM core domain. [4Fe-4S] cluster-binding residues include cysteine 70, cysteine 74, and cysteine 77.

Belongs to the radical SAM superfamily. CofH family. As to quaternary structure, consists of two subunits, CofG and CofH. It depends on [4Fe-4S] cluster as a cofactor.

It carries out the reaction 5-amino-6-(D-ribitylamino)uracil + L-tyrosine + S-adenosyl-L-methionine = 5-amino-5-(4-hydroxybenzyl)-6-(D-ribitylimino)-5,6-dihydrouracil + 2-iminoacetate + 5'-deoxyadenosine + L-methionine + H(+). Its pathway is cofactor biosynthesis; coenzyme F0 biosynthesis. Functionally, catalyzes the radical-mediated synthesis of 5-amino-5-(4-hydroxybenzyl)-6-(D-ribitylimino)-5,6-dihydrouracil from 5-amino-6-(D-ribitylamino)uracil and L-tyrosine. This chain is 5-amino-6-(D-ribitylamino)uracil--L-tyrosine 4-hydroxyphenyl transferase, found in Methanopyrus kandleri (strain AV19 / DSM 6324 / JCM 9639 / NBRC 100938).